A 360-amino-acid polypeptide reads, in one-letter code: MYINQQKKSFFNKKRIILSSIVVLFLIIGGAFLYGKSLLEPVEKDSKTTVNINIPSGSSVSAIASILKKNDVIKSEKAFQYYVKYKGASGFQAGFYHLNKGMDLDAIIQKLTSGATGYAFQITVTEGAQLTQIAAAIADETKYSKKQVIAKLDDETFINQLKKEFPDTVTNDVFNKNIKHPLEGYLFPATYPFNDPDTSLEDIIKAMIKQTNSYVETYKSEMKKNKVSVHKLLTMASLIEEEATEKADRHKIASVFYNRLKKKMPLQTDPTVLYAAGKHKDRVLYKDLEIDSPYNTYKNTGLTPGPIANAGMSSWEAALHPDKTDYLYFLAKSNGEVVFTKTLKEHNKAKEKYISSKNEK.

The chain crosses the membrane as a helical span at residues 16–36 (IILSSIVVLFLIIGGAFLYGK).

This sequence belongs to the transglycosylase MltG family.

Its subcellular location is the cell membrane. The catalysed reaction is a peptidoglycan chain = a peptidoglycan chain with N-acetyl-1,6-anhydromuramyl-[peptide] at the reducing end + a peptidoglycan chain with N-acetylglucosamine at the non-reducing end.. Functions as a peptidoglycan terminase that cleaves nascent peptidoglycan strands endolytically to terminate their elongation. The polypeptide is Endolytic murein transglycosylase (Bacillus subtilis (strain 168)).